Reading from the N-terminus, the 316-residue chain is Transaldolase (316 aa).

The active-site Schiff-base intermediate with substrate is K131.

The protein belongs to the transaldolase family. Type 1 subfamily. In terms of assembly, homodimer.

The protein resides in the cytoplasm. The enzyme catalyses D-sedoheptulose 7-phosphate + D-glyceraldehyde 3-phosphate = D-erythrose 4-phosphate + beta-D-fructose 6-phosphate. The protein operates within carbohydrate degradation; pentose phosphate pathway; D-glyceraldehyde 3-phosphate and beta-D-fructose 6-phosphate from D-ribose 5-phosphate and D-xylulose 5-phosphate (non-oxidative stage): step 2/3. In terms of biological role, transaldolase is important for the balance of metabolites in the pentose-phosphate pathway. This Buchnera aphidicola subsp. Baizongia pistaciae (strain Bp) protein is Transaldolase.